A 67-amino-acid chain; its full sequence is Small ribosomal subunit protein eS17 (67 aa).

The protein belongs to the eukaryotic ribosomal protein eS17 family.

The sequence is that of Small ribosomal subunit protein eS17 from Korarchaeum cryptofilum (strain OPF8).